Reading from the N-terminus, the 208-residue chain is Large ribosomal subunit protein uL3 (208 aa).

A disordered region spans residues 126 to 150; it reads NQSRGPMAHGSRYHRRPGSMGPVAP.

This sequence belongs to the universal ribosomal protein uL3 family. In terms of assembly, part of the 50S ribosomal subunit. Forms a cluster with proteins L14 and L19.

In terms of biological role, one of the primary rRNA binding proteins, it binds directly near the 3'-end of the 23S rRNA, where it nucleates assembly of the 50S subunit. This Exiguobacterium sibiricum (strain DSM 17290 / CCUG 55495 / CIP 109462 / JCM 13490 / 255-15) protein is Large ribosomal subunit protein uL3.